The chain runs to 451 residues: Probable NADH dehydrogenase (451 aa).

Residue 41–71 (KLIILGCGWGSYSFLKNLNSIKYDITVISPR) coordinates FAD. An NAD(+)-binding site is contributed by 199–236 (LSFVIVGGGATGIEFTSELNDFFSEDLSRLFPFVPVNE).

Belongs to the NADH dehydrogenase family. Requires FAD as cofactor.

The catalysed reaction is a ubiquinone + NADH + 5 H(+)(in) = a ubiquinol + NAD(+) + 4 H(+)(out). The polypeptide is Probable NADH dehydrogenase (Dictyostelium discoideum (Social amoeba)).